A 339-amino-acid polypeptide reads, in one-letter code: Ketol-acid reductoisomerase (NADP(+)) (339 aa).

The 182-residue stretch at 1–182 folds into the KARI N-terminal Rossmann domain; it reads MRVYYDRDAD…GGGRAGIIET (182 aa). NADP(+)-binding positions include 24 to 27, R48, S51, T53, and 83 to 86; these read YGSQ and DELQ. The active site involves H108. Residue G134 participates in NADP(+) binding. The KARI C-terminal knotted domain occupies 183 to 328; the sequence is TFREECETDL…AKLREMMPWI (146 aa). Mg(2+)-binding residues include D191, E195, E227, and E231. S252 contributes to the substrate binding site.

This sequence belongs to the ketol-acid reductoisomerase family. The cofactor is Mg(2+).

The enzyme catalyses (2R)-2,3-dihydroxy-3-methylbutanoate + NADP(+) = (2S)-2-acetolactate + NADPH + H(+). It carries out the reaction (2R,3R)-2,3-dihydroxy-3-methylpentanoate + NADP(+) = (S)-2-ethyl-2-hydroxy-3-oxobutanoate + NADPH + H(+). Its pathway is amino-acid biosynthesis; L-isoleucine biosynthesis; L-isoleucine from 2-oxobutanoate: step 2/4. The protein operates within amino-acid biosynthesis; L-valine biosynthesis; L-valine from pyruvate: step 2/4. Its function is as follows. Involved in the biosynthesis of branched-chain amino acids (BCAA). Catalyzes an alkyl-migration followed by a ketol-acid reduction of (S)-2-acetolactate (S2AL) to yield (R)-2,3-dihydroxy-isovalerate. In the isomerase reaction, S2AL is rearranged via a Mg-dependent methyl migration to produce 3-hydroxy-3-methyl-2-ketobutyrate (HMKB). In the reductase reaction, this 2-ketoacid undergoes a metal-dependent reduction by NADPH to yield (R)-2,3-dihydroxy-isovalerate. In Rhodopseudomonas palustris (strain BisA53), this protein is Ketol-acid reductoisomerase (NADP(+)).